A 1089-amino-acid chain; its full sequence is Translocase of chloroplast 120, chloroplastic (1089 aa).

Glycine 2 bears the N-acetylglycine mark. 3 disordered regions span residues 158–179 (ATED…GVVS), 255–339 (TLSP…GLGR), and 353–381 (QPRV…EHDE). Residues 165-176 (ENGNTHSSSENG) are compositionally biased toward polar residues. Serine 179, serine 263, and serine 283 each carry phosphoserine. The segment covering 300–312 (EIKESQHMERESE) has biased composition (basic and acidic residues). Positions 327–339 (AALPPARPAGLGR) are enriched in low complexity. Residues 353–374 (QPRVNGNVSHNQPQQAEDSTTA) are compositionally biased toward polar residues. Positions 454–683 (DFSCTIMVLG…KLQDNIPGGQ (230 aa)) constitute an AIG1-type G domain. The interval 463-470 (GKSGVGKS) is G1. GTP is bound by residues 466–471 (GVGKSA) and 485–490 (DAFQVG). Serine 470 provides a ligand contact to Mg(2+). The interval 485-488 (DAFQ) is homodimerization. Residues 489–493 (VGTKK) are G2. The segment at 510-513 (DTPG) is G3. The segment at 548-553 (RLDMQS) is homodimerization. The segment at 582–585 (THAA) is G4. GTP-binding positions include histidine 583 and 631–632 (EN). A G5 region spans residues 631–633 (ENH). The disordered stretch occupies residues 710–748 (PEQQYDDEDDEDDLDESSDSEEESEYDELPPFKRLTKAE). A compositionally biased stretch (acidic residues) spans 713-737 (QYDDEDDEDDLDESSDSEEESEYDE). Residues 767 to 788 (REKLFMKRQMKEERKRRKLLKK) adopt a coiled-coil conformation. A helical membrane pass occupies residues 1064–1080 (LAVVALVPLFKKLLTYY).

It belongs to the TRAFAC class TrmE-Era-EngA-EngB-Septin-like GTPase superfamily. AIG1/Toc34/Toc159-like paraseptin GTPase family. TOC159 subfamily. As to quaternary structure, homodimer. Part of the TOC core complex that includes 1 protein for the specific recognition of transit peptides surrounded by a ring composed of four proteins forming translocation channels, and four to five GTP-binding proteins providing energy. This core complex can interact with components of the TIC complex to form a larger import complex. Chloroplastic protein precursor such as prSS (precursor of the RuBisCO small subunit) interacts with these complexes. The TOC complex contains a specific subset of polar lipids such as digalactosyldiacylglyceride (DGDG), phosphatidylcholine (PC) and phosphatidylglycerol (PG). The cofactor is Mg(2+). Post-translationally, phosphorylated by KOC1. In terms of tissue distribution, expressed in seedlings, flowers, and roots.

The protein localises to the plastid. It is found in the chloroplast outer membrane. It localises to the cytoplasm. Functionally, GTPase involved in protein precursor import into chloroplasts. Seems to recognize chloroplast-destined precursor proteins and regulate their presentation to the translocation channel through GTP hydrolysis. Probably specialized in the import of nuclear encoded non-photosynthetic preproteins from the cytoplasm to the chloroplast. This chain is Translocase of chloroplast 120, chloroplastic, found in Arabidopsis thaliana (Mouse-ear cress).